Consider the following 83-residue polypeptide: Carboxysome shell vertex protein CsoS4A (83 aa).

The BMV domain maps to M1–D78.

Belongs to the CcmL/EutN family. CsoS4 subfamily. As to quaternary structure, homopentamer.

Its subcellular location is the carboxysome. Probably forms vertices in the carboxysome, a polyhedral inclusion where RuBisCO (ribulose bisphosphate carboxylase, cbbL-cbbS) is sequestered. Has been modeled to induce curvature upon insertion into an otherwise flat hexagonal layer of major carboxysome subunits. A minor shell protein, only 12 pentamers of CsoS4A/CsoS4B are calculated to be present in each carboxysome. The 2 CsoS4 proteins contribute to the impermeability of the carboxysome to CO(2). In terms of biological role, unlike beta-carboxysomes, alpha-carboxysomes (Cb) can form without cargo protein. CsoS2 is essential for Cb formation and is also capable of targeting foreign proteins to the Cb. The Cb shell assembles with the aid of CsoS2; CsoS1A, CsoS1B and CsoS1C form the majority of the shell while CsoS4A and CsoS4B form vertices. CsoS1D forms pseudohexamers that probably control metabolite flux into and out of the shell. This Halothiobacillus neapolitanus (strain ATCC 23641 / c2) (Thiobacillus neapolitanus) protein is Carboxysome shell vertex protein CsoS4A.